Here is a 101-residue protein sequence, read N- to C-terminus: Small ribosomal subunit protein bS18c (101 aa).

This sequence belongs to the bacterial ribosomal protein bS18 family. In terms of assembly, part of the 30S ribosomal subunit.

The protein localises to the plastid. The protein resides in the chloroplast. The protein is Small ribosomal subunit protein bS18c of Lepidium virginicum (Virginia pepperweed).